Consider the following 154-residue polypeptide: D-aminoacyl-tRNA deacylase (154 aa).

Positions 142–143 (GP) match the Gly-cisPro motif, important for rejection of L-amino acids motif.

It belongs to the DTD family. Homodimer.

It is found in the cytoplasm. It carries out the reaction glycyl-tRNA(Ala) + H2O = tRNA(Ala) + glycine + H(+). The catalysed reaction is a D-aminoacyl-tRNA + H2O = a tRNA + a D-alpha-amino acid + H(+). In terms of biological role, an aminoacyl-tRNA editing enzyme that deacylates mischarged D-aminoacyl-tRNAs. Also deacylates mischarged glycyl-tRNA(Ala), protecting cells against glycine mischarging by AlaRS. Acts via tRNA-based rather than protein-based catalysis; rejects L-amino acids rather than detecting D-amino acids in the active site. By recycling D-aminoacyl-tRNA to D-amino acids and free tRNA molecules, this enzyme counteracts the toxicity associated with the formation of D-aminoacyl-tRNA entities in vivo and helps enforce protein L-homochirality. The sequence is that of D-aminoacyl-tRNA deacylase (DTD1) from Yarrowia lipolytica (strain CLIB 122 / E 150) (Yeast).